The primary structure comprises 88 residues: Phosphocarrier protein HPr (88 aa).

In terms of domain architecture, HPr spans 1–88 (MKTQQFTVID…TLLTEMGLAQ (88 aa)). His-15 (pros-phosphohistidine intermediate) is an active-site residue. The residue at position 46 (Ser-46) is a Phosphoserine; by HPrK/P.

The protein belongs to the HPr family.

It localises to the cytoplasm. With respect to regulation, phosphorylation on Ser-46 inhibits the phosphoryl transfer from enzyme I to HPr. General (non sugar-specific) component of the phosphoenolpyruvate-dependent sugar phosphotransferase system (sugar PTS). This major carbohydrate active-transport system catalyzes the phosphorylation of incoming sugar substrates concomitantly with their translocation across the cell membrane. The phosphoryl group from phosphoenolpyruvate (PEP) is transferred to the phosphoryl carrier protein HPr by enzyme I. Phospho-HPr then transfers it to the PTS EIIA domain. In terms of biological role, P-Ser-HPr interacts with the catabolite control protein A (CcpA), forming a complex that binds to DNA at the catabolite response elements cre, operator sites preceding a large number of catabolite-regulated genes. Thus, P-Ser-HPr is a corepressor in carbon catabolite repression (CCR), a mechanism that allows bacteria to coordinate and optimize the utilization of available carbon sources. P-Ser-HPr also plays a role in inducer exclusion, in which it probably interacts with several non-PTS permeases and inhibits their transport activity. The polypeptide is Phosphocarrier protein HPr (ptsH) (Lysinibacillus sphaericus (Bacillus sphaericus)).